Here is a 275-residue protein sequence, read N- to C-terminus: NH(3)-dependent NAD(+) synthetase (275 aa).

46-53 (GISGGQDS) is an ATP binding site. Asp-52 contacts Mg(2+). Residue Arg-140 participates in deamido-NAD(+) binding. Position 160 (Thr-160) interacts with ATP. Residue Glu-165 participates in Mg(2+) binding. Residues Lys-173 and Asp-180 each contribute to the deamido-NAD(+) site. Lys-189 and Thr-211 together coordinate ATP. 260–261 (HK) serves as a coordination point for deamido-NAD(+).

This sequence belongs to the NAD synthetase family. As to quaternary structure, homodimer.

The enzyme catalyses deamido-NAD(+) + NH4(+) + ATP = AMP + diphosphate + NAD(+) + H(+). The protein operates within cofactor biosynthesis; NAD(+) biosynthesis; NAD(+) from deamido-NAD(+) (ammonia route): step 1/1. Its function is as follows. Catalyzes the ATP-dependent amidation of deamido-NAD to form NAD. Uses ammonia as a nitrogen source. The chain is NH(3)-dependent NAD(+) synthetase from Cronobacter sakazakii (strain ATCC BAA-894) (Enterobacter sakazakii).